The primary structure comprises 154 residues: Ascorbate-specific PTS system EIIA component (154 aa).

Positions 6–150 (SLAENKSIRL…QEVLDLIDRT (145 aa)) constitute a PTS EIIA type-2 domain. The active-site Tele-phosphohistidine intermediate is His-68. His-68 carries the phosphohistidine modification.

The protein resides in the cytoplasm. The phosphoenolpyruvate-dependent sugar phosphotransferase system (sugar PTS), a major carbohydrate active transport system, catalyzes the phosphorylation of incoming sugar substrates concomitantly with their translocation across the cell membrane. The enzyme II UlaABC PTS system is involved in ascorbate transport. The sequence is that of Ascorbate-specific PTS system EIIA component (ulaC) from Shigella boydii serotype 4 (strain Sb227).